A 160-amino-acid polypeptide reads, in one-letter code: Cytosolic iron-sulfur assembly component 2A (160 aa).

Residues histidine 89, histidine 123, glutamate 150, and glutamate 153 each coordinate Zn(2+).

The protein belongs to the MIP18 family. In terms of assembly, monomer and homodimer. Component of the CIA complex. Interacts with CIAO1. Interacts with IREB2. Interacts with APAF1. In terms of tissue distribution, substantially enriched in macrophages.

The protein resides in the cytoplasm. Its function is as follows. Component of the cytosolic iron-sulfur protein assembly (CIA) complex, a multiprotein complex that mediates the incorporation of iron-sulfur cluster into extramitochondrial Fe/S proteins. As a CIA complex component and in collaboration with CIAO1 specifically matures ACO1 and stabilizes IREB2, connecting cytosolic iron-sulfur protein maturation with cellular iron regulation. May play a role in chromosome segregation through establishment of sister chromatid cohesion. May induce apoptosis in collaboration with APAF1. The sequence is that of Cytosolic iron-sulfur assembly component 2A from Homo sapiens (Human).